The chain runs to 119 residues: Auxin-responsive protein SAUR78 (119 aa).

It belongs to the ARG7 family.

In terms of biological role, may be involved in the regulation of ethylene receptor signaling. Promotes cell expansion and plant growth. This Arabidopsis thaliana (Mouse-ear cress) protein is Auxin-responsive protein SAUR78.